We begin with the raw amino-acid sequence, 247 residues long: Sortase A (247 aa).

Residues 1–9 lie on the Cytoplasmic side of the membrane; sequence MRNKKKLHG. Residues 10–30 form a helical membrane-spanning segment; sequence FFNFVRWLLVVLLIIVGLALV. Residues 31-247 are Extracellular-facing; that stretch reads FNKPIRNAFI…FSKKYNQINL (217 aa). His-140 functions as the Proton donor/acceptor in the catalytic mechanism. The Acyl-thioester intermediate role is filled by Cys-206.

It belongs to the bacterial sortase family. Class A subfamily.

The protein resides in the cell membrane. In terms of biological role, transpeptidase that anchors surface proteins to the cell wall. Recognizes and modifies its substrate by proteolytic cleavage of a C-terminal sorting signal. Following cleavage, a covalent intermediate is formed via a thioester bond between the sortase and its substrate, which is then transferred and covalently attached to the cell wall. This sortase recognizes a Leu-Pro-x-Thr-Gly (LPXTG) motif, which is cleaved by the sortase between the threonine and glycine residues. Essential for adherence to eukaryotic cells and for binding to fibronectin and fibrinogen. The polypeptide is Sortase A (Streptococcus agalactiae serotype III (strain NEM316)).